A 415-amino-acid polypeptide reads, in one-letter code: Isocitrate dehydrogenase [NADP] 1 (415 aa).

T104 lines the NADP(+) pocket. Residues S113, N115, R119, R129, and R153 each coordinate D-threo-isocitrate. D307 is a Mg(2+) binding site. Residues 339 to 345 (HGTAPKY), N352, Y390, and R394 each bind NADP(+).

It belongs to the isocitrate and isopropylmalate dehydrogenases family. As to quaternary structure, homodimer. Mg(2+) is required as a cofactor. Mn(2+) serves as cofactor.

The catalysed reaction is D-threo-isocitrate + NADP(+) = 2-oxoglutarate + CO2 + NADPH. In terms of biological role, catalyzes the oxidative decarboxylation of isocitrate to 2-oxoglutarate and carbon dioxide with the concomitant reduction of NADP(+). This Colwellia maris protein is Isocitrate dehydrogenase [NADP] 1.